The following is a 203-amino-acid chain: Ribosome maturation factor RimP (203 aa).

The disordered stretch occupies residues 184–203 (RRGSAPVEDEEGEGEAPTAH).

It belongs to the RimP family.

The protein resides in the cytoplasm. Functionally, required for maturation of 30S ribosomal subunits. This is Ribosome maturation factor RimP from Methylobacterium nodulans (strain LMG 21967 / CNCM I-2342 / ORS 2060).